Reading from the N-terminus, the 890-residue chain is Serine/threonine-protein kinase D3 (890 aa).

Phosphoserine occurs at positions 6, 27, 37, 41, and 44. The Phorbol-ester/DAG-type 1 zinc-finger motif lies at 154-204 (PHTLYVHSYKAPTFCDYCGEMLWGLVRQGLKCEGCGLNYHKRCAFKIPNNC). S213 and S216 each carry phosphoserine. Residues 271–321 (PHTFAVHSYTRPTICQYCKRLLKGLFRQGMQCKDCKFNCHKRCASKVPRDC) form a Phorbol-ester/DAG-type 2 zinc finger. Positions 332 to 371 (SSLGTDTDIPMDIDNNDINSDSSRGLDDTEEPSPPEDKMF) are disordered. S364, S391, and S395 each carry phosphoserine. Residues 416–532 (TMVKEGWMVH…WEKAIRQALM (117 aa)) enclose the PH domain. Y426 carries the post-translational modification Phosphotyrosine. Position 442 is a phosphoserine (S442). Y457 is modified (phosphotyrosine). A Phosphothreonine modification is found at T535. S539 carries the phosphoserine modification. Residues 576 to 832 (IFADEVLGSG…VDKSLSHPWL (257 aa)) form the Protein kinase domain. Residues 582 to 590 (LGSGQFGIV) and K605 contribute to the ATP site. Residue D699 is the Proton acceptor of the active site. A Phosphoserine; by PKC modification is found at S731. A Phosphoserine; by autocatalysis modification is found at S735. The residue at position 742 (Y742) is a Phosphotyrosine.

It belongs to the protein kinase superfamily. CAMK Ser/Thr protein kinase family. PKD subfamily. The cofactor is Mg(2+). Ubiquitous.

Its subcellular location is the cytoplasm. The protein localises to the membrane. The enzyme catalyses L-seryl-[protein] + ATP = O-phospho-L-seryl-[protein] + ADP + H(+). It catalyses the reaction L-threonyl-[protein] + ATP = O-phospho-L-threonyl-[protein] + ADP + H(+). Activated by DAG and phorbol esters. Phorbol-ester/DAG-type domains 1 and 2 bind both DAG and phorbol ester with high affinity and mediate translocation to the cell membrane. Autophosphorylation of Ser-735 and phosphorylation of Ser-731 by PKC relieves auto-inhibition by the PH domain. Functionally, converts transient diacylglycerol (DAG) signals into prolonged physiological effects, downstream of PKC. Involved in resistance to oxidative stress. This chain is Serine/threonine-protein kinase D3 (PRKD3), found in Homo sapiens (Human).